The chain runs to 339 residues: MNIGIVNDLPLAVEALRRVIALRADHRVLWVATDGDEAVDFCVAHPPDVVLMDLVMPKVDGVAATRRIMARAPCAILIVTASVSANTSSVYEAMGAGALDAVDTPTLALGLSTDASPQALLAKIDQIGRLLESRTTALVPPGPAPTRGQPTLVAIGASAGGPTALTALLRALPADFPAAIVIVQHVDQAFAYGMAEWLDGYTRLPVRVARQGSVPEAGAVLLAATNDHLMLSPRGVLGYTRHPAETPYRPSIDVFFNSVADGWQGDALGVLLTGMGRDGALGLKAMRAKGCYTIAQDQATSAVYGMPKAAAAIGAASAILPLDQIAPQLIARIALTSRD.

The region spanning 2–119 (NIGIVNDLPL…GLSTDASPQA (118 aa)) is the Response regulatory domain. Asp53 is subject to 4-aspartylphosphate. Residues 141-336 (PGPAPTRGQP…PQLIARIALT (196 aa)) enclose the CheB-type methylesterase domain. Residues Ser158, His185, and Asp278 contribute to the active site.

Belongs to the CheB family. Phosphorylated by CheA. Phosphorylation of the N-terminal regulatory domain activates the methylesterase activity.

It localises to the cytoplasm. The enzyme catalyses [protein]-L-glutamate 5-O-methyl ester + H2O = L-glutamyl-[protein] + methanol + H(+). It carries out the reaction L-glutaminyl-[protein] + H2O = L-glutamyl-[protein] + NH4(+). In terms of biological role, involved in chemotaxis. Part of a chemotaxis signal transduction system that modulates chemotaxis in response to various stimuli. Catalyzes the demethylation of specific methylglutamate residues introduced into the chemoreceptors (methyl-accepting chemotaxis proteins or MCP) by CheR. Also mediates the irreversible deamidation of specific glutamine residues to glutamic acid. This Burkholderia orbicola (strain AU 1054) protein is Protein-glutamate methylesterase/protein-glutamine glutaminase 3.